The following is a 137-amino-acid chain: Putative pre-16S rRNA nuclease (137 aa).

Belongs to the YqgF nuclease family.

It localises to the cytoplasm. Its function is as follows. Could be a nuclease involved in processing of the 5'-end of pre-16S rRNA. The sequence is that of Putative pre-16S rRNA nuclease from Chromobacterium violaceum (strain ATCC 12472 / DSM 30191 / JCM 1249 / CCUG 213 / NBRC 12614 / NCIMB 9131 / NCTC 9757 / MK).